The sequence spans 335 residues: CTD kinase subunit beta (335 aa).

Cyclin N-terminal domains follow at residues 26–151 and 158–241; these read ILST…CFDF and NYMV…LYMH. A disordered region spans residues 269–293; the sequence is KNSGRPQKPPQIDPHSSSLADEYRE.

The protein belongs to the cyclin family. In terms of assembly, CTDK-I consists of three subunits, ctk1/lsk1, ctk2/lsc1 and ctk3 (also called alpha, beta and gamma). Interacts with ctk1/lsk1. This interaction is dependent on ctk1/lsk1 kinase activity.

It localises to the cytoplasm. The protein localises to the nucleus. Cyclin subunit of the CTDK-I complex, which hyperphosphorylates the C-terminal heptapeptide repeat domain (CTD) of the largest RNA polymerase II subunit. As part of the CTDK-I complex, involved in RNA polymerase II transcriptional elongation and pre-mRNA 3'-end processing. Together with ctk3, required for ctk1/lsk1 CTD kinase activation. Together with ctk1/lsk1, required for the regulation of cytokinesis by phosphorylating 'Ser-2' residues found in the heptad repeats of the CTD. The chain is CTD kinase subunit beta (lsc1) from Schizosaccharomyces pombe (strain 972 / ATCC 24843) (Fission yeast).